Reading from the N-terminus, the 188-residue chain is Inner membrane-spanning protein YciB (188 aa).

5 helical membrane passes run 22–42 (IYIASGALIAATALSLAVTWM), 50–70 (MTLVTFAMVVVFGSLTLVFHN), 72–92 (LFIKWKVTIIYALFAVALLVS), 121–141 (FAWAMFFLVCGLVNIYIAFWL), and 149–169 (FKVFGLTGVTLLFTLICGVYI).

The protein belongs to the YciB family.

Its subcellular location is the cell inner membrane. Plays a role in cell envelope biogenesis, maintenance of cell envelope integrity and membrane homeostasis. This Pectobacterium carotovorum subsp. carotovorum (strain PC1) protein is Inner membrane-spanning protein YciB.